Consider the following 356-residue polypeptide: RuBisCO accumulation factor 1 (356 aa).

An N-terminal alpha-helix region spans residues 7-185 (ALTTEVLQRL…RQALEKLLTD (179 aa)). The segment at 209-342 (PYLVPVAGTA…LLLVLRPPQV (134 aa)) is C-terminal beta-sheet.

This sequence belongs to the RAF family. As to quaternary structure, homodimer. Forms an RbcL(8)-Raf1(8) complex. Forms complexes of many stoichiometries with RbcL with and without RbcS. RbcX and Raf1 can bind simultaneously to RbcL.

It is found in the cytoplasm. A major RuBisCO chaperone. Acts after GroEL-GroES chaperonin to fold and/or assemble the large subunit of RuBisCO (ccbL, rbcL). Cooperates with RbcX in RbcL folding, plays the major role in assembly of dimers into RbcL(8)-Raf1(8) intermediate complexes. RbcS replaces Raf1, leading to holoenzyme formation. In terms of biological role, required for optimal reconstitution of RuBisCO upon expression of rbcL-rbcS subunits in E.coli. Only interacts with the large subunit (cbbL, rbcL). Probably acts in the final stages of RuBisCO assembly, possibly participating in the addition of the small subunit (ccbS, rbcS). The protein is RuBisCO accumulation factor 1 of Thermosynechococcus vestitus (strain NIES-2133 / IAM M-273 / BP-1).